Reading from the N-terminus, the 282-residue chain is Pantothenate synthetase (282 aa).

Residue 30–37 participates in ATP binding; it reads MGYLHEGH. His-37 functions as the Proton donor in the catalytic mechanism. Gln-61 is a binding site for (R)-pantoate. Gln-61 contributes to the beta-alanine binding site. 147–150 contributes to the ATP binding site; the sequence is GMKD. Position 153 (Gln-153) interacts with (R)-pantoate. ATP is bound by residues Val-176 and 184 to 187; that span reads KSSR.

This sequence belongs to the pantothenate synthetase family. Homodimer.

The protein resides in the cytoplasm. The catalysed reaction is (R)-pantoate + beta-alanine + ATP = (R)-pantothenate + AMP + diphosphate + H(+). Its pathway is cofactor biosynthesis; (R)-pantothenate biosynthesis; (R)-pantothenate from (R)-pantoate and beta-alanine: step 1/1. Its function is as follows. Catalyzes the condensation of pantoate with beta-alanine in an ATP-dependent reaction via a pantoyl-adenylate intermediate. The chain is Pantothenate synthetase from Bacillus cereus (strain ATCC 10987 / NRS 248).